A 63-amino-acid chain; its full sequence is Large ribosomal subunit protein uL29 (63 aa).

Belongs to the universal ribosomal protein uL29 family.

This chain is Large ribosomal subunit protein uL29, found in Bacillus cereus (strain ATCC 14579 / DSM 31 / CCUG 7414 / JCM 2152 / NBRC 15305 / NCIMB 9373 / NCTC 2599 / NRRL B-3711).